A 107-amino-acid chain; its full sequence is MVIRVFIASSSGFVAIKKKQQDVVRFLEANKIEFEEVDITMSEEQRQWMYKNVPLEKKPTQGNPLPPQIFNGDRYCGDYDSFFESKESNTVFSFLGLKPRLASKAEP.

The SH3-binding signature appears at 61–67 (QGNPLPP).

This sequence belongs to the SH3BGR family.

Its subcellular location is the nucleus. In Pongo abelii (Sumatran orangutan), this protein is SH3 domain-binding glutamic acid-rich-like protein 2 (SH3BGRL2).